Reading from the N-terminus, the 485-residue chain is Glutamate--tRNA ligase (485 aa).

The short motif at P12–T22 is the 'HIGH' region element. Residues K253 to R257 carry the 'KMSKS' region motif. K256 contributes to the ATP binding site.

This sequence belongs to the class-I aminoacyl-tRNA synthetase family. Glutamate--tRNA ligase type 1 subfamily. In terms of assembly, monomer.

Its subcellular location is the cytoplasm. It catalyses the reaction tRNA(Glu) + L-glutamate + ATP = L-glutamyl-tRNA(Glu) + AMP + diphosphate. In terms of biological role, catalyzes the attachment of glutamate to tRNA(Glu) in a two-step reaction: glutamate is first activated by ATP to form Glu-AMP and then transferred to the acceptor end of tRNA(Glu). The polypeptide is Glutamate--tRNA ligase (Rhizobium meliloti (strain 1021) (Ensifer meliloti)).